A 239-amino-acid polypeptide reads, in one-letter code: UDP-2,3-diacylglucosamine hydrolase (239 aa).

Mn(2+) is bound by residues Asp9, His11, Asp42, Asn80, and His115. Asn80–Arg81 is a binding site for substrate. The substrate site is built by Asp123, Ser161, Lys165, Lys168, and His196. 2 residues coordinate Mn(2+): His196 and His198.

This sequence belongs to the LpxH family. Mn(2+) serves as cofactor.

The protein resides in the cell inner membrane. It carries out the reaction UDP-2-N,3-O-bis[(3R)-3-hydroxytetradecanoyl]-alpha-D-glucosamine + H2O = 2-N,3-O-bis[(3R)-3-hydroxytetradecanoyl]-alpha-D-glucosaminyl 1-phosphate + UMP + 2 H(+). The protein operates within glycolipid biosynthesis; lipid IV(A) biosynthesis; lipid IV(A) from (3R)-3-hydroxytetradecanoyl-[acyl-carrier-protein] and UDP-N-acetyl-alpha-D-glucosamine: step 4/6. Hydrolyzes the pyrophosphate bond of UDP-2,3-diacylglucosamine to yield 2,3-diacylglucosamine 1-phosphate (lipid X) and UMP by catalyzing the attack of water at the alpha-P atom. Involved in the biosynthesis of lipid A, a phosphorylated glycolipid that anchors the lipopolysaccharide to the outer membrane of the cell. In Pasteurella multocida (strain Pm70), this protein is UDP-2,3-diacylglucosamine hydrolase.